We begin with the raw amino-acid sequence, 121 residues long: Large ribosomal subunit protein uL14c (121 aa).

It belongs to the universal ribosomal protein uL14 family. As to quaternary structure, part of the 50S ribosomal subunit.

It localises to the plastid. The protein localises to the chloroplast. Functionally, binds to 23S rRNA. The chain is Large ribosomal subunit protein uL14c from Euglena gracilis.